An 82-amino-acid polypeptide reads, in one-letter code: Small ribosomal subunit protein eS27 (82 aa).

The C4-type zinc finger occupies 37 to 59; sequence CPGCFTITTVFSHAQTVVICQGC.

This sequence belongs to the eukaryotic ribosomal protein eS27 family. Component of the small ribosomal subunit (SSU). Mature N.crassa ribosomes consist of a small (40S) and a large (60S) subunit. The 40S small subunit contains 1 molecule of ribosomal RNA (18S rRNA) and at least 32 different proteins. The large 60S subunit contains 3 rRNA molecules (26S, 5.8S and 5S rRNA) and at least 42 different proteins. It depends on Zn(2+) as a cofactor.

The protein localises to the cytoplasm. Its function is as follows. Component of the ribosome, a large ribonucleoprotein complex responsible for the synthesis of proteins in the cell. The small ribosomal subunit (SSU) binds messenger RNAs (mRNAs) and translates the encoded message by selecting cognate aminoacyl-transfer RNA (tRNA) molecules. The large subunit (LSU) contains the ribosomal catalytic site termed the peptidyl transferase center (PTC), which catalyzes the formation of peptide bonds, thereby polymerizing the amino acids delivered by tRNAs into a polypeptide chain. The nascent polypeptides leave the ribosome through a tunnel in the LSU and interact with protein factors that function in enzymatic processing, targeting, and the membrane insertion of nascent chains at the exit of the ribosomal tunnel. The protein is Small ribosomal subunit protein eS27 (crp-6) of Neurospora crassa (strain ATCC 24698 / 74-OR23-1A / CBS 708.71 / DSM 1257 / FGSC 987).